The primary structure comprises 610 residues: UvrABC system protein C (610 aa).

One can recognise a GIY-YIG domain in the interval 16-94 (SQPGVYRMYD…IKLYQPRYNV (79 aa)). The UVR domain maps to 204 to 239 (DQVLTQLISRMETASQNLEFEEAARIRDQIQAVRRV).

This sequence belongs to the UvrC family. In terms of assembly, interacts with UvrB in an incision complex.

Its subcellular location is the cytoplasm. Functionally, the UvrABC repair system catalyzes the recognition and processing of DNA lesions. UvrC both incises the 5' and 3' sides of the lesion. The N-terminal half is responsible for the 3' incision and the C-terminal half is responsible for the 5' incision. The polypeptide is UvrABC system protein C (Escherichia coli O45:K1 (strain S88 / ExPEC)).